Here is a 250-residue protein sequence, read N- to C-terminus: Small ribosomal subunit protein uS3 (250 aa).

Positions 39-107 (VREFLTKKLK…PAQVSINEID (69 aa)) constitute a KH type-2 domain. The tract at residues 215–250 (MNPAPAEERPAKRGRGRGEGQERRGRRGDRAADKGE) is disordered. Over residues 220-250 (AEERPAKRGRGRGEGQERRGRRGDRAADKGE) the composition is skewed to basic and acidic residues.

Belongs to the universal ribosomal protein uS3 family. As to quaternary structure, part of the 30S ribosomal subunit. Forms a tight complex with proteins S10 and S14.

In terms of biological role, binds the lower part of the 30S subunit head. Binds mRNA in the 70S ribosome, positioning it for translation. This Acinetobacter baumannii (strain SDF) protein is Small ribosomal subunit protein uS3.